A 207-amino-acid polypeptide reads, in one-letter code: Large ribosomal subunit protein uL3 (207 aa).

This sequence belongs to the universal ribosomal protein uL3 family. As to quaternary structure, part of the 50S ribosomal subunit. Forms a cluster with proteins L14 and L19.

One of the primary rRNA binding proteins, it binds directly near the 3'-end of the 23S rRNA, where it nucleates assembly of the 50S subunit. In Fervidobacterium nodosum (strain ATCC 35602 / DSM 5306 / Rt17-B1), this protein is Large ribosomal subunit protein uL3.